We begin with the raw amino-acid sequence, 381 residues long: Nitric oxide reductase FlRd-NAD(+) reductase (381 aa).

This sequence belongs to the FAD-dependent oxidoreductase family. FAD serves as cofactor.

It localises to the cytoplasm. It catalyses the reaction 2 reduced [nitric oxide reductase rubredoxin domain] + NAD(+) + H(+) = 2 oxidized [nitric oxide reductase rubredoxin domain] + NADH. Its pathway is nitrogen metabolism; nitric oxide reduction. Functionally, one of at least two accessory proteins for anaerobic nitric oxide (NO) reductase. Reduces the rubredoxin moiety of NO reductase. This Aliivibrio fischeri (strain ATCC 700601 / ES114) (Vibrio fischeri) protein is Nitric oxide reductase FlRd-NAD(+) reductase.